We begin with the raw amino-acid sequence, 110 residues long: Ribonuclease P protein component 1 (110 aa).

It belongs to the eukaryotic/archaeal RNase P protein component 1 family. In terms of assembly, consists of a catalytic RNA component and at least 4-5 protein subunits.

The protein localises to the cytoplasm. The enzyme catalyses Endonucleolytic cleavage of RNA, removing 5'-extranucleotides from tRNA precursor.. Part of ribonuclease P, a protein complex that generates mature tRNA molecules by cleaving their 5'-ends. The chain is Ribonuclease P protein component 1 from Aeropyrum pernix (strain ATCC 700893 / DSM 11879 / JCM 9820 / NBRC 100138 / K1).